The following is a 72-amino-acid chain: Long neurotoxin OH-17 (72 aa).

Disulfide bonds link cysteine 3/cysteine 21, cysteine 14/cysteine 42, cysteine 27/cysteine 31, cysteine 46/cysteine 57, and cysteine 58/cysteine 63.

The protein belongs to the three-finger toxin family. Long-chain subfamily. Type II alpha-neurotoxin sub-subfamily. In terms of tissue distribution, expressed by the venom gland.

The protein localises to the secreted. Its function is as follows. Binds with high affinity to muscular (alpha-1/CHRNA1) and neuronal (alpha-7/CHRNA7) nicotinic acetylcholine receptor (nAChR) and inhibits acetylcholine from binding to the receptor, thereby impairing neuromuscular and neuronal transmission. The chain is Long neurotoxin OH-17 from Ophiophagus hannah (King cobra).